The chain runs to 204 residues: uncharacterized protein (204 aa).

Residues 160–180 (GLTVAAIASVVVAGAVTYLVV) traverse the membrane as a helical segment.

To M.pneumoniae MPN_373 C-terminal region.

The protein localises to the cell membrane. This is an uncharacterized protein from Mycoplasma pneumoniae (strain ATCC 29342 / M129 / Subtype 1) (Mycoplasmoides pneumoniae).